A 33-amino-acid polypeptide reads, in one-letter code: Glutaminase-asparaginase (33 aa).

One can recognise an Asparaginase/glutaminase domain in the interval asparagine 1–lysine 33. Threonine 10 (acyl-ester intermediate) is an active-site residue.

Belongs to the asparaginase 1 family. As to quaternary structure, homotetramer.

The protein resides in the periplasm. It catalyses the reaction L-glutamine + H2O = L-glutamate + NH4(+). It carries out the reaction L-asparagine + H2O = L-aspartate + NH4(+). The chain is Glutaminase-asparaginase (ansB) from Delftia acidovorans (Pseudomonas acidovorans).